The primary structure comprises 578 residues: Membrane protein insertase YidC (578 aa).

The chain crosses the membrane as a helical span at residues 3–23 (IQRSILIVALAVVSYLLVLQW). A disordered region spans residues 34-72 (AASASMNTTQGLPDTPSASGTSSDVPTAQSSAAGSEAAD). Over residues 37–66 (ASMNTTQGLPDTPSASGTSSDVPTAQSSAA) the composition is skewed to polar residues. Helical transmembrane passes span 361–381 (LELTVDYGFLWFIAQPIFWLL), 387–407 (LIGNWGWSIIALTVLIKLAFF), 457–477 (LGGCLPILVQMPVFLSLYWVL), 500–520 (PFFILPIVMGGTMLIQQMLNP), and 535–555 (PIIFTFFFLWFPAGLVLYWVV).

Belongs to the OXA1/ALB3/YidC family. Type 1 subfamily. In terms of assembly, interacts with the Sec translocase complex via SecD. Specifically interacts with transmembrane segments of nascent integral membrane proteins during membrane integration.

It is found in the cell inner membrane. In terms of biological role, required for the insertion and/or proper folding and/or complex formation of integral membrane proteins into the membrane. Involved in integration of membrane proteins that insert both dependently and independently of the Sec translocase complex, as well as at least some lipoproteins. Aids folding of multispanning membrane proteins. The protein is Membrane protein insertase YidC of Pseudomonas aeruginosa (strain ATCC 15692 / DSM 22644 / CIP 104116 / JCM 14847 / LMG 12228 / 1C / PRS 101 / PAO1).